The sequence spans 313 residues: Tyrosine recombinase XerC (313 aa).

Residues 11 to 97 (NSLQKPLERF…SLRSFFDFLI (87 aa)) enclose the Core-binding (CB) domain. Residues 118-298 (PLPKNLDVDE…DFQHLAQAYD (181 aa)) form the Tyr recombinase domain. Catalysis depends on residues R157, K181, H250, R253, and H276. The O-(3'-phospho-DNA)-tyrosine intermediate role is filled by Y285.

Belongs to the 'phage' integrase family. XerC subfamily. Forms a cyclic heterotetrameric complex composed of two molecules of XerC and two molecules of XerD.

It localises to the cytoplasm. Functionally, site-specific tyrosine recombinase, which acts by catalyzing the cutting and rejoining of the recombining DNA molecules. The XerC-XerD complex is essential to convert dimers of the bacterial chromosome into monomers to permit their segregation at cell division. It also contributes to the segregational stability of plasmids. The chain is Tyrosine recombinase XerC from Vibrio campbellii (strain ATCC BAA-1116).